The following is a 539-amino-acid chain: Inosine-5'-monophosphate dehydrogenase (539 aa).

2 CBS domains span residues 140–196 (IIVN…DMPI) and 200–257 (MTRE…PRAC). NAD(+) contacts are provided by residues D292 and 343-345 (GIG). The K(+) site is built by G345 and G347. An IMP-binding site is contributed by S348. K(+) is bound at residue C350. C350 functions as the Thioimidate intermediate in the catalytic mechanism. IMP-binding positions include 383-385 (DGG), 406-407 (GS), and 430-434 (YRGMG). Catalysis depends on R446, which acts as the Proton acceptor. Residue E460 coordinates IMP. Residues E514 and H516 each contribute to the K(+) site. The tract at residues 517 to 539 (PHDIAITQEAPNYSPDVHSGDAG) is disordered.

Belongs to the IMPDH/GMPR family. Homotetramer. K(+) serves as cofactor.

The enzyme catalyses IMP + NAD(+) + H2O = XMP + NADH + H(+). It functions in the pathway purine metabolism; XMP biosynthesis via de novo pathway; XMP from IMP: step 1/1. Its activity is regulated as follows. Mycophenolic acid (MPA) is a non-competitive inhibitor that prevents formation of the closed enzyme conformation by binding to the same site as the amobile flap. In contrast, mizoribine monophosphate (MZP) is a competitive inhibitor that induces the closed conformation. MPA is a potent inhibitor of mammalian IMPDHs but a poor inhibitor of the bacterial enzymes. MZP is a more potent inhibitor of bacterial IMPDH. Its function is as follows. Catalyzes the conversion of inosine 5'-phosphate (IMP) to xanthosine 5'-phosphate (XMP), the first committed and rate-limiting step in the de novo synthesis of guanine nucleotides, and therefore plays an important role in the regulation of cell growth. The sequence is that of Inosine-5'-monophosphate dehydrogenase from Rhodopirellula baltica (strain DSM 10527 / NCIMB 13988 / SH1).